The chain runs to 782 residues: Coiled-coil alpha-helical rod protein 1 (782 aa).

2 stretches are compositionally biased toward basic and acidic residues: residues 62–74 (ERDVSSDRQEPGR) and 208–218 (ETRRAGEAKEL). 2 disordered regions span residues 62–82 (ERDVSSDRQEPGRRGRSWGLE) and 182–218 (LTQAHEEALSSLTSKAEGLEKSLSSLETRRAGEAKEL). Coiled-coil stretches lie at residues 82–314 (EGSQ…ELTR), 344–437 (LMVQ…NAVS), and 498–691 (VADV…QQEG).

The protein resides in the cytoplasm. Its subcellular location is the nucleus. May be a regulator of keratinocyte proliferation or differentiation. The chain is Coiled-coil alpha-helical rod protein 1 (CCHCR1) from Pan paniscus (Pygmy chimpanzee).